Reading from the N-terminus, the 195-residue chain is SAGA-associated factor 11 homolog (195 aa).

Positions 1 to 22 (MSAANMPTTTGAQGSGNQVPRT) are disordered. The SGF11-type zinc-finger motif lies at 105 to 126 (CTCPNCDRLVAAARFAPHLEKC). Residues 140 to 195 (RLATKEGATSAHLHSSGNTGGTDDEDDVDWSSDKRRKKSNQNSRNNGSKKNNGKTF) are disordered. A Phosphoserine modification is found at serine 171. Over residues 179–195 (NQNSRNNGSKKNNGKTF) the composition is skewed to low complexity.

It belongs to the SGF11 family. As to quaternary structure, component of some SAGA transcription coactivator-HAT complexes, at least composed of Ada2b, not/nonstop, Pcaf/Gcn5, Sgf11 and Spt3. Within the SAGA complex, Sgf11, e(y)2, and not/nonstop form an additional subcomplex of SAGA called the DUB module (deubiquitination module). Interacts directly with not/nonstop. Interacts with the AMEX complex component xmas-2. Interacts with Cbp80; important for promoter recruitment of Sgf11 that is not associated with the DUB module.

It is found in the nucleus. Its subcellular location is the nucleoplasm. The protein localises to the cytoplasm. Functionally, component of the transcription regulatory histone acetylation (HAT) complex SAGA, a multiprotein complex that activates transcription by remodeling chromatin and mediating histone acetylation and deubiquitination. Within the SAGA complex, participates in a subcomplex that specifically deubiquitinates histone H2B. The SAGA complex is recruited to specific gene promoters by activators, where it is required for transcription. Required for nuclear receptor-mediated transactivation. Binds independently on SAGA to promoters in an RNA-dependent manner. Binds to mRNA and is essential for total mRNA export from the nucleus. Required to counteract heterochromatin silencing. Controls the development of neuronal connectivity in visual system by being required for accurate axon targeting in the optic lobe. Required for expression of ecdysone-induced genes such as br/broad. In Drosophila sechellia (Fruit fly), this protein is SAGA-associated factor 11 homolog.